The primary structure comprises 383 residues: S-adenosylmethionine synthase (383 aa).

Histidine 15 is an ATP binding site. Aspartate 17 serves as a coordination point for Mg(2+). Glutamate 43 serves as a coordination point for K(+). Positions 56 and 99 each coordinate L-methionine. The segment at 99–109 is flexible loop; the sequence is QSPDINQGVDR. ATP-binding positions include 164 to 166, 230 to 231, aspartate 239, 245 to 246, alanine 262, and lysine 266; these read DAK, RF, and RK. Position 239 (aspartate 239) interacts with L-methionine. Lysine 270 is a binding site for L-methionine.

It belongs to the AdoMet synthase family. In terms of assembly, homotetramer; dimer of dimers. Requires Mg(2+) as cofactor. The cofactor is K(+).

Its subcellular location is the cytoplasm. It catalyses the reaction L-methionine + ATP + H2O = S-adenosyl-L-methionine + phosphate + diphosphate. The protein operates within amino-acid biosynthesis; S-adenosyl-L-methionine biosynthesis; S-adenosyl-L-methionine from L-methionine: step 1/1. In terms of biological role, catalyzes the formation of S-adenosylmethionine (AdoMet) from methionine and ATP. The overall synthetic reaction is composed of two sequential steps, AdoMet formation and the subsequent tripolyphosphate hydrolysis which occurs prior to release of AdoMet from the enzyme. This chain is S-adenosylmethionine synthase, found in Pseudoalteromonas translucida (strain TAC 125).